The sequence spans 492 residues: Glutamate--cysteine ligase A, chloroplastic (492 aa).

Cys-156 and Cys-376 are oxidised to a cystine.

It belongs to the carboxylate-amine ligase family. Glutamate--cysteine ligase type 2 subfamily. In terms of assembly, homodimer or monomer when oxidized or reduced, respectively. Post-translationally, the Cys-156-Cys-376 disulfide bridge is known to modulate the enzyme activity according to the redox status. The oxidized form constitutes the active enzyme.

The protein resides in the plastid. The protein localises to the chloroplast. The catalysed reaction is L-cysteine + L-glutamate + ATP = gamma-L-glutamyl-L-cysteine + ADP + phosphate + H(+). It participates in sulfur metabolism; glutathione biosynthesis; glutathione from L-cysteine and L-glutamate: step 1/2. The protein is Glutamate--cysteine ligase A, chloroplastic (GSH1-1) of Oryza sativa subsp. japonica (Rice).